Consider the following 586-residue polypeptide: Probable zinc metalloprotease EGY3, chloroplastic (586 aa).

The transit peptide at 1–54 (MASSSLVTSLLFSSSSSSNTATSTSSRRSFSLFSKNQYCKPRPLRRSSSRLLVR) directs the protein to the chloroplast. 2 disordered regions span residues 13 to 32 (SSSS…SFSL) and 58 to 122 (QQQQ…DWRS). Over residues 61 to 73 (QEEKAAPAAESHH) the composition is skewed to basic and acidic residues. Residues 103-195 (VKKSKEELEE…NTFKALDLNK (93 aa)) adopt a coiled-coil conformation. 7 helical membrane-spanning segments follow: residues 287–307 (LSAV…SGFF), 318–338 (VSDV…SEIA), 389–409 (ASAY…DGSL), 427–447 (PLLS…GNVL), 454–474 (VGVP…VTSL), 506–526 (VALG…WGLF), and 550–570 (YAWG…NGGG).

This sequence belongs to the peptidase M50B family.

It is found in the plastid. The protein localises to the chloroplast membrane. In terms of biological role, probable membrane-associated metalloprotease that may be involved in chloroplast development. This Oryza sativa subsp. japonica (Rice) protein is Probable zinc metalloprotease EGY3, chloroplastic (EGY3).